The chain runs to 1430 residues: FYVE, RhoGEF and PH domain-containing protein 6 (1430 aa).

The segment at 1–36 (MTSAAEIKKPPVAPKPKFVVANNKPAPPPIAPKPDI) is disordered. The span at 15–24 (KPKFVVANNK) shows a compositional bias: low complexity. Ser231 bears the Phosphoserine mark. The tract at residues 330-351 (CVDTPSESTEEPGNSDSSSSCL) is disordered. Over residues 334–351 (PSESTEEPGNSDSSSSCL) the composition is skewed to polar residues. A Phosphoserine modification is found at Ser515. The interval 516–538 (EELLEKSSYPSSEEKSSEKSLER) is disordered. Over residues 527 to 538 (SEEKSSEKSLER) the composition is skewed to basic and acidic residues. Phosphoserine occurs at positions 554, 605, 692, and 721. 2 disordered regions span residues 695–739 (NYSL…PYKS) and 800–869 (PDGQ…NGMK). Residues 728-739 (SRESSSQAPYKS) show a composition bias toward polar residues. Over residues 831-847 (PSDEEEIINSSDEDDVS) the composition is skewed to acidic residues. Positions 851–868 (SKGEPDPLEDKQDEDNGM) are enriched in basic and acidic residues. The 190-residue stretch at 871–1060 (KVHHIAKEIM…IEVANHANDT (190 aa)) folds into the DH domain. The PH 1 domain occupies 1089-1183 (VFLKEGILMK…WLEAISRAIE (95 aa)). Ser1197 carries the post-translational modification Phosphoserine. The FYVE-type zinc-finger motif lies at 1222 to 1281 (DTRATMCMICTSEFTLTWRRHHCRACGKIVCQACSSNKYGLDYLKNQPARVCEHCFQELQ). Positions 1228, 1231, 1244, 1247, 1252, 1255, 1273, and 1276 each coordinate Zn(2+). One can recognise a PH 2 domain in the interval 1333–1429 (DSSMSGYLYR…WIEAFQEGTI (97 aa)).

The protein resides in the cytoplasm. It localises to the cytoskeleton. May activate CDC42, a member of the Ras-like family of Rho- and Rac proteins, by exchanging bound GDP for free GTP. May play a role in regulating the actin cytoskeleton and cell shape. In Homo sapiens (Human), this protein is FYVE, RhoGEF and PH domain-containing protein 6 (FGD6).